We begin with the raw amino-acid sequence, 149 residues long: Transcriptional repressor NrdR (149 aa).

The segment at 3 to 34 is a zinc-finger region; it reads CPFCFAVDTKVIDSRLVGEGSSVRRRRQCLVC. In terms of domain architecture, ATP-cone spans 49 to 139; that stretch reads PRVVKSNDVR…VYRSFEDIKE (91 aa).

It belongs to the NrdR family. It depends on Zn(2+) as a cofactor.

Its function is as follows. Negatively regulates transcription of bacterial ribonucleotide reductase nrd genes and operons by binding to NrdR-boxes. This is Transcriptional repressor NrdR from Escherichia fergusonii (strain ATCC 35469 / DSM 13698 / CCUG 18766 / IAM 14443 / JCM 21226 / LMG 7866 / NBRC 102419 / NCTC 12128 / CDC 0568-73).